The chain runs to 388 residues: Chalcone synthase DIV (388 aa).

Cysteine 164 is a catalytic residue.

It belongs to the thiolase-like superfamily. Chalcone/stilbene synthases family.

It carries out the reaction (E)-4-coumaroyl-CoA + 3 malonyl-CoA + 3 H(+) = 2',4,4',6'-tetrahydroxychalcone + 3 CO2 + 4 CoA. It functions in the pathway secondary metabolite biosynthesis; flavonoid biosynthesis. Its function is as follows. The primary product of this enzyme is 4,2',4',6'-tetrahydroxychalcone (also termed naringenin-chalcone or chalcone) which can under specific conditions spontaneously isomerize into naringenin. This Ipomoea batatas (Sweet potato) protein is Chalcone synthase DIV (CHS-DIV).